Reading from the N-terminus, the 754-residue chain is 5-methyltetrahydropteroyltriglutamate--homocysteine methyltransferase (754 aa).

Residues 17–20 (RELK) and lysine 117 contribute to the 5-methyltetrahydropteroyltri-L-glutamate site. Residues 431 to 433 (IGS) and glutamate 484 each bind L-homocysteine. Residues 431 to 433 (IGS) and glutamate 484 contribute to the L-methionine site. 5-methyltetrahydropteroyltri-L-glutamate contacts are provided by residues 515 to 516 (RC) and tryptophan 561. Aspartate 599 is a binding site for L-homocysteine. Aspartate 599 lines the L-methionine pocket. Position 605 (glutamate 605) interacts with 5-methyltetrahydropteroyltri-L-glutamate. Zn(2+)-binding residues include histidine 641, cysteine 643, and glutamate 665. Histidine 694 (proton donor) is an active-site residue. Cysteine 726 lines the Zn(2+) pocket.

The protein belongs to the vitamin-B12 independent methionine synthase family. It depends on Zn(2+) as a cofactor.

It catalyses the reaction 5-methyltetrahydropteroyltri-L-glutamate + L-homocysteine = tetrahydropteroyltri-L-glutamate + L-methionine. It functions in the pathway amino-acid biosynthesis; L-methionine biosynthesis via de novo pathway; L-methionine from L-homocysteine (MetE route): step 1/1. Catalyzes the transfer of a methyl group from 5-methyltetrahydrofolate to homocysteine resulting in methionine formation. This is 5-methyltetrahydropteroyltriglutamate--homocysteine methyltransferase from Salmonella paratyphi B (strain ATCC BAA-1250 / SPB7).